The sequence spans 465 residues: Protein hedgehog (465 aa).

C79 carries N-palmitoyl cysteine lipidation. Residues E143, E144, D149, T179, E180, D183, and D185 each coordinate Ca(2+). The Cholesterol glycine ester moiety is linked to residue G251.

The protein belongs to the hedgehog family. In terms of assembly, interacts with shf. The C-terminal part of the hedgehog protein precursor displays an autoproteolysis activity that results in the cleavage of the full-length protein into two parts (N-product and C-product). In addition, the C-terminal part displays a cholesterol transferase activity that results by the covalent attachment of a cholesterol moiety to the C-terminal of the newly generated N-product. The N-product is the active species in both local and long-range signaling, whereas the C-product has no signaling activity. Post-translationally, cholesterylation is required for N-product targeting to lipid rafts and multimerization. In terms of processing, N-palmitoylation by Rasp of the hedgehog N-product, within the secretory pathway, is required for the embryonic and larval patterning activities of the hedgehog signal.

It is found in the nucleus. Its subcellular location is the cytoplasm. The protein localises to the cell membrane. The catalysed reaction is glycyl-L-cysteinyl-[protein] + cholesterol + H(+) = [protein]-C-terminal glycyl cholesterol ester + N-terminal L-cysteinyl-[protein]. The C-terminal part of the hedgehog protein precursor displays an autoproteolysis activity that results in the cleavage of the full-length protein into two parts (N-product and C-product). In addition, the C-terminal part displays a cholesterol transferase activity that results by the covalent attachment of a cholesterol moiety to the C-terminal of the newly generated N-product. Once cleaved, the C-product has no signaling activity and diffuses from the cell. In terms of biological role, the dually lipidated hedgehog protein N-product is a morphogen which is essential for a variety of patterning events during development. Establishes the anterior-posterior axis of the embryonic segments and patterns the larval imaginal disks. Binds to the patched (ptc) receptor, which functions in association with smoothened (smo), to activate the transcription of target genes wingless (wg), decapentaplegic (dpp) and ptc. In the absence of hh, ptc represses the constitutive signaling activity of smo through fused (fu). Essential component of a signaling pathway which regulates the Duox-dependent gut immune response to bacterial uracil; required to activate Cad99C-dependent endosome formation, norpA-dependent Ca2+ mobilization and p38 MAPK, which are essential steps in the Duox-dependent production of reactive oxygen species (ROS) in response to intestinal bacterial infection. During photoreceptor differentiation, it up-regulates transcription of Ubr3, which in turn promotes the hh-signaling pathway by mediating the ubiquitination and degradation of cos. This Drosophila yakuba (Fruit fly) protein is Protein hedgehog.